We begin with the raw amino-acid sequence, 185 residues long: Elongation factor P (185 aa).

It belongs to the elongation factor P family.

The protein resides in the cytoplasm. The protein operates within protein biosynthesis; polypeptide chain elongation. Its function is as follows. Involved in peptide bond synthesis. Stimulates efficient translation and peptide-bond synthesis on native or reconstituted 70S ribosomes in vitro. Probably functions indirectly by altering the affinity of the ribosome for aminoacyl-tRNA, thus increasing their reactivity as acceptors for peptidyl transferase. This chain is Elongation factor P, found in Fervidobacterium nodosum (strain ATCC 35602 / DSM 5306 / Rt17-B1).